A 187-amino-acid polypeptide reads, in one-letter code: ATP synthase subunit b 2 (187 aa).

The helical transmembrane segment at 32 to 52 (TTFAAQILWLAIAFGLLYYLM) threads the bilayer.

It belongs to the ATPase B chain family. F-type ATPases have 2 components, F(1) - the catalytic core - and F(0) - the membrane proton channel. F(1) has five subunits: alpha(3), beta(3), gamma(1), delta(1), epsilon(1). F(0) has three main subunits: a(1), b(2) and c(10-14). The alpha and beta chains form an alternating ring which encloses part of the gamma chain. F(1) is attached to F(0) by a central stalk formed by the gamma and epsilon chains, while a peripheral stalk is formed by the delta and b chains.

Its subcellular location is the cell inner membrane. Its function is as follows. F(1)F(0) ATP synthase produces ATP from ADP in the presence of a proton or sodium gradient. F-type ATPases consist of two structural domains, F(1) containing the extramembraneous catalytic core and F(0) containing the membrane proton channel, linked together by a central stalk and a peripheral stalk. During catalysis, ATP synthesis in the catalytic domain of F(1) is coupled via a rotary mechanism of the central stalk subunits to proton translocation. Component of the F(0) channel, it forms part of the peripheral stalk, linking F(1) to F(0). The b'-subunit is a diverged and duplicated form of b found in plants and photosynthetic bacteria. The polypeptide is ATP synthase subunit b 2 (atpF2) (Methylobacterium sp. (strain 4-46)).